The following is a 588-amino-acid chain: Transcription factor 7-like 1 (588 aa).

Positions 1–31 (MPQLGGGGGGGGGGSGGGGGSSAGAAGGGDD) are enriched in gly residues. The tract at residues 1–74 (MPQLGGGGGG…VKSSLVNESE (74 aa)) is CTNNB1-binding. Disordered stretches follow at residues 1–101 (MPQL…PRDY), 203–234 (SPGS…SPYY), and 409–506 (LYPT…LSLT). A compositionally biased stretch (low complexity) spans 67–81 (SSLVNESENQSSSSD). Positions 83–101 (EAERRPQPVRDTFQKPRDY) are enriched in basic and acidic residues. The segment at residues 346–414 (VKKPLNAFML…LHSQLYPTWS (69 aa)) is a DNA-binding region (HMG box). The Nuclear localization signal motif lies at 421-427 (KKKKRKR). Low complexity-rich tracts occupy residues 431-441 (LSQTQSQQQVQ) and 478-497 (SPAT…ATHS).

Belongs to the TCF/LEF family. As to quaternary structure, binds the armadillo repeat of CTNNB1 and forms a stable complex. Interacts with DAZAP2. As to expression, detected in hair follicles and skin keratinocytes, and at lower levels in stomach epithelium.

The protein resides in the nucleus. Functionally, participates in the Wnt signaling pathway. Binds to DNA and acts as a repressor in the absence of CTNNB1, and as an activator in its presence. Necessary for the terminal differentiation of epidermal cells, the formation of keratohyalin granules and the development of the barrier function of the epidermis. Down-regulates NQO1, leading to increased mitomycin c resistance. The protein is Transcription factor 7-like 1 (TCF7L1) of Homo sapiens (Human).